A 63-amino-acid polypeptide reads, in one-letter code: Potassium channel toxin Sp4 (63 aa).

Positions Met1–Gly20 are cleaved as a signal peptide. 3 disulfides stabilise this stretch: Cys31-Cys53, Cys38-Cys58, and Cys42-Cys60.

The protein belongs to the long chain scorpion toxin family. Class 2 subfamily. In terms of tissue distribution, expressed by the venom gland.

The protein localises to the secreted. Its function is as follows. This recombinant toxin selectively inhibits mouse voltage-gated potassium channel Kv1.3/KCNA3 (IC(50)=24.73 nM). This is Potassium channel toxin Sp4 from Scorpiops pococki (Scorpion).